A 153-amino-acid polypeptide reads, in one-letter code: Putative ATP synthase subunit f, mitochondrial (153 aa).

Belongs to the ATPase F chain family. As to quaternary structure, subunit of the F-type ATPase which has 2 components, CF(1) - the catalytic core - and CF(0) - the membrane proton channel.

It is found in the mitochondrion membrane. Functionally, mitochondrial membrane ATP synthase (F(1)F(0) ATP synthase or Complex V) produces ATP from ADP in the presence of a proton gradient across the membrane which is generated by electron transport complexes of the respiratory chain. F-type ATPases consist of two structural domains, F(1) - containing the extramembraneous catalytic core and F(0) - containing the membrane proton channel, linked together by a central stalk and a peripheral stalk. During catalysis, ATP synthesis in the catalytic domain of F(1) is coupled via a rotary mechanism of the central stalk subunits to proton translocation. Part of the complex F(0) domain. Minor subunit located with subunit a in the membrane. This chain is Putative ATP synthase subunit f, mitochondrial, found in Caenorhabditis elegans.